Here is a 383-residue protein sequence, read N- to C-terminus: Chaperone protein DnaJ (383 aa).

Positions 5–70 (DYYEALGVAR…QKRAAYDQFG (66 aa)) constitute a J domain. The CR-type zinc finger occupies 139–217 (GTEVQIRVPT…CGGRGRVQSQ (79 aa)). Residues cysteine 152, cysteine 155, cysteine 169, cysteine 172, cysteine 191, cysteine 194, cysteine 205, and cysteine 208 each coordinate Zn(2+). CXXCXGXG motif repeat units follow at residues 152-159 (CDACDGKG), 169-176 (CPTCKGHG), 191-198 (CPRCGGSG), and 205-212 (CRKCGGRG). The segment at 230–249 (TGDRIRLSGEGEPGENGGPP) is disordered.

Belongs to the DnaJ family. Homodimer. It depends on Zn(2+) as a cofactor.

The protein resides in the cytoplasm. In terms of biological role, participates actively in the response to hyperosmotic and heat shock by preventing the aggregation of stress-denatured proteins and by disaggregating proteins, also in an autonomous, DnaK-independent fashion. Unfolded proteins bind initially to DnaJ; upon interaction with the DnaJ-bound protein, DnaK hydrolyzes its bound ATP, resulting in the formation of a stable complex. GrpE releases ADP from DnaK; ATP binding to DnaK triggers the release of the substrate protein, thus completing the reaction cycle. Several rounds of ATP-dependent interactions between DnaJ, DnaK and GrpE are required for fully efficient folding. Also involved, together with DnaK and GrpE, in the DNA replication of plasmids through activation of initiation proteins. The sequence is that of Chaperone protein DnaJ from Alkalilimnicola ehrlichii (strain ATCC BAA-1101 / DSM 17681 / MLHE-1).